A 558-amino-acid polypeptide reads, in one-letter code: CTP synthase (558 aa).

Residues 1–267 (MAKFVFVTGG…CLEMLDVLNL (267 aa)) form an amidoligase domain region. Residue Ser-13 participates in CTP binding. Position 13 (Ser-13) interacts with UTP. Residues 14-19 (SIGKGI) and Asp-71 each bind ATP. Asp-71 and Glu-141 together coordinate Mg(2+). Residues 148 to 150 (DIE), 188 to 193 (KTKPTQ), and Lys-224 each bind CTP. UTP is bound by residues 188–193 (KTKPTQ) and Lys-224. A Glutamine amidotransferase type-1 domain is found at 292 to 534 (KVALVGKYVQ…IEAAQLRLPA (243 aa)). Gly-354 contributes to the L-glutamine binding site. The active-site Nucleophile; for glutamine hydrolysis is the Cys-381. L-glutamine contacts are provided by residues 382 to 385 (LGMQ), Glu-405, and Arg-462. Residues His-507 and Glu-509 contribute to the active site. The tract at residues 536–558 (PDEALRRQSQTNISAQEKPSRIG) is disordered. Polar residues predominate over residues 542–552 (RQSQTNISAQE).

The protein belongs to the CTP synthase family. In terms of assembly, homotetramer.

It carries out the reaction UTP + L-glutamine + ATP + H2O = CTP + L-glutamate + ADP + phosphate + 2 H(+). The catalysed reaction is L-glutamine + H2O = L-glutamate + NH4(+). It catalyses the reaction UTP + NH4(+) + ATP = CTP + ADP + phosphate + 2 H(+). It functions in the pathway pyrimidine metabolism; CTP biosynthesis via de novo pathway; CTP from UDP: step 2/2. With respect to regulation, allosterically activated by GTP, when glutamine is the substrate; GTP has no effect on the reaction when ammonia is the substrate. The allosteric effector GTP functions by stabilizing the protein conformation that binds the tetrahedral intermediate(s) formed during glutamine hydrolysis. Inhibited by the product CTP, via allosteric rather than competitive inhibition. Functionally, catalyzes the ATP-dependent amination of UTP to CTP with either L-glutamine or ammonia as the source of nitrogen. Regulates intracellular CTP levels through interactions with the four ribonucleotide triphosphates. This chain is CTP synthase, found in Prochlorococcus marinus (strain MIT 9303).